The following is a 448-amino-acid chain: Tryptophan dimethylallyltransferase 1 (448 aa).

L-tryptophan contacts are provided by residues 80 to 81 (IL) and E89. Residues R100, K186, and Y188 each coordinate substrate. Y190 and R251 together coordinate L-tryptophan. R264, K266, Y268, Q350, Y352, Y416, and Y420 together coordinate substrate.

It belongs to the tryptophan dimethylallyltransferase family. Homodimer.

It catalyses the reaction L-tryptophan + dimethylallyl diphosphate = 4-(3-methylbut-2-enyl)-L-tryptophan + diphosphate. It functions in the pathway alkaloid biosynthesis; ergot alkaloid biosynthesis. Functionally, catalyzes the first step of ergot alkaloid biosynthesis. Ergot alkaloids, which are produced by endophyte fungi, can enhance plant host fitness, but also cause livestock toxicosis to host plants. This Epichloe coenophiala (Tall fescue endophyte fungus) protein is Tryptophan dimethylallyltransferase 1 (dmaW1).